The following is a 188-amino-acid chain: dTTP/UTP pyrophosphatase (188 aa).

Asp-67 (proton acceptor) is an active-site residue.

The protein belongs to the Maf family. YhdE subfamily. Requires a divalent metal cation as cofactor.

It localises to the cytoplasm. It catalyses the reaction dTTP + H2O = dTMP + diphosphate + H(+). The catalysed reaction is UTP + H2O = UMP + diphosphate + H(+). In terms of biological role, nucleoside triphosphate pyrophosphatase that hydrolyzes dTTP and UTP. May have a dual role in cell division arrest and in preventing the incorporation of modified nucleotides into cellular nucleic acids. The chain is dTTP/UTP pyrophosphatase from Thermococcus kodakarensis (strain ATCC BAA-918 / JCM 12380 / KOD1) (Pyrococcus kodakaraensis (strain KOD1)).